A 270-amino-acid polypeptide reads, in one-letter code: Phosphoserine phosphatase (270 aa).

Catalysis depends on D67, which acts as the Nucleophile. Residues D67 and D69 each coordinate Mg(2+). D69 serves as the catalytic Proton donor. Residues E76, R112, 156–157, and K205 contribute to the substrate site; that span reads SG. Position 227 (D227) interacts with Mg(2+).

The protein belongs to the HAD-like hydrolase superfamily. SerB family. The cofactor is Mg(2+).

The catalysed reaction is O-phospho-L-serine + H2O = L-serine + phosphate. It catalyses the reaction O-phospho-D-serine + H2O = D-serine + phosphate. Its pathway is amino-acid biosynthesis; L-serine biosynthesis; L-serine from 3-phospho-D-glycerate: step 3/3. Catalyzes the last step in the biosynthesis of serine from carbohydrates. The reaction mechanism proceeds via the formation of a phosphoryl-enzyme intermediates. This is Phosphoserine phosphatase (aay) from Drosophila melanogaster (Fruit fly).